Here is a 652-residue protein sequence, read N- to C-terminus: ATP-binding cassette sub-family G member 5 (652 aa).

Residues 1–30 (MSELPFLSPEGARGPHNNRGSQSSLEEGSV) are disordered. The Cytoplasmic segment spans residues 1–384 (MSELPFLSPE…RVTRNLMRNK (384 aa)). The span at 18-30 (NRGSQSSLEEGSV) shows a compositional bias: polar residues. One can recognise an ABC transporter domain in the interval 39–294 (LGVLNVSFSV…FNNCGYPCPE (256 aa)). 87–94 (GSSGSGKT) lines the ATP pocket. Residues 385-405 (QVVIMRLVQNLIMGLFLIFYL) traverse the membrane as a helical segment. The 258-residue stretch at 389-646 (MRLVQNLIMG…ILGMVVFKVR (258 aa)) folds into the ABC transmembrane type-2 domain. Residues 406–422 (LRVQNNMLKGAVQDRVG) are Extracellular-facing. The helical transmembrane segment at 423–443 (LLYQLVGATPYTGMLNAVNLF) threads the bilayer. Over 444 to 468 (PMLRAVSDQESQDGLYQKWQMLLAY) the chain is Cytoplasmic. A helical membrane pass occupies residues 469 to 490 (VLHALPFSIVATVIFSSVCYWT). The Extracellular portion of the chain corresponds to 491 to 501 (LGLYPEVARFG). Residues 502–522 (YFSAALLAPHLIGEFLTLVLL) traverse the membrane as a helical segment. Residues 523–529 (GMVQNPN) are Cytoplasmic-facing. Residues 530–550 (IVNSIVALLSISGLLIGSGFI) traverse the membrane as a helical segment. Residues 551–624 (RNIEEMPIPL…PGATSRFTTN (74 aa)) lie on the Extracellular side of the membrane. 2 N-linked (GlcNAc...) asparagine glycosylation sites follow: Asn-585 and Asn-592. The chain crosses the membrane as a helical span at residues 625 to 645 (FLILYSFIPTLVILGMVVFKV). At 646-652 (RDYLISR) the chain is on the cytoplasmic side.

It belongs to the ABC transporter superfamily. ABCG family. Eye pigment precursor importer (TC 3.A.1.204) subfamily. In terms of assembly, heterodimer with ABCG8. It depends on Mg(2+) as a cofactor. Post-translationally, N-glycosylated. N-glycosylation is important for efficient export out of the endoplasmic reticulum. In terms of tissue distribution, detected in liver (at protein level). Expressed only in liver and intestine.

It localises to the cell membrane. Its subcellular location is the apical cell membrane. It catalyses the reaction cholesterol(in) + ATP + H2O = cholesterol(out) + ADP + phosphate + H(+). The catalysed reaction is sitosterol(in) + ATP + H2O = sitosterol(out) + ADP + phosphate + H(+). Its function is as follows. ABCG5 and ABCG8 form an obligate heterodimer that mediates Mg(2+)- and ATP-dependent sterol transport across the cell membrane. Plays an essential role in the selective transport of dietary plant sterols and cholesterol in and out of the enterocytes and in the selective sterol excretion by the liver into bile. Required for normal sterol homeostasis. The heterodimer with ABCG8 has ATPase activity. This chain is ATP-binding cassette sub-family G member 5, found in Rattus norvegicus (Rat).